Consider the following 576-residue polypeptide: FtsZ-localized protein C (576 aa).

As to quaternary structure, interacts with FtsZ filaments.

Its subcellular location is the cytoplasm. The protein localises to the cell inner membrane. Its function is as follows. Membrane anchor for FtsZ. Binds and recruits FtsZ polymers to membranes early in the cell cycle. May also improve the efficiency of cytokinesis through the regulation of cell wall hydrolysis. This chain is FtsZ-localized protein C, found in Caulobacter vibrioides (strain NA1000 / CB15N) (Caulobacter crescentus).